An 858-amino-acid polypeptide reads, in one-letter code: Taste receptor type 1 member 3 (858 aa).

The N-terminal stretch at methionine 1–glycine 20 is a signal peptide. The Extracellular portion of the chain corresponds to serine 21 to leucine 575. Asparagine 85, asparagine 130, asparagine 203, asparagine 264, asparagine 379, asparagine 387, asparagine 418, asparagine 439, and asparagine 482 each carry an N-linked (GlcNAc...) asparagine glycan. The helical transmembrane segment at serine 576–valine 596 threads the bilayer. Residues histidine 597–serine 610 lie on the Cytoplasmic side of the membrane. Residues leucine 611–glycine 631 form a helical membrane-spanning segment. Residues arginine 632–methionine 644 are Extracellular-facing. The helical transmembrane segment at alanine 645–valine 665 threads the bilayer. The Cytoplasmic portion of the chain corresponds to glutamate 666 to tryptophan 687. Residues leucine 688–phenylalanine 708 form a helical membrane-spanning segment. Residues proline 709–leucine 735 lie on the Extracellular side of the membrane. A helical transmembrane segment spans residues glycine 736–valine 756. Topologically, residues glutamine 757–arginine 767 are cytoplasmic. Residues glycine 768–alanine 788 form a helical membrane-spanning segment. The Extracellular segment spans residues asparagine 789–proline 796. A helical membrane pass occupies residues alanine 797 to proline 817. Residues lysine 818–glutamate 858 are Cytoplasmic-facing. The disordered stretch occupies residues proline 839 to glutamate 858.

It belongs to the G-protein coupled receptor 3 family. TAS1R subfamily. As to quaternary structure, forms homodimers or heterodimers with TAS1R1 and TAS1R2.

Its subcellular location is the cell membrane. Functionally, putative taste receptor. TAS1R1/TAS1R3 responds to the umami taste stimulus (the taste of monosodium glutamate) and also to most of the 20 standard L-amino acids, but not to their D-enantiomers or other compounds. TAS1R2/TAS1R3 recognizes diverse natural and synthetic sweeteners. TAS1R3 is essential for the recognition and response to the disaccharide trehalose. Sequence differences within and between species can significantly influence the selectivity and specificity of taste responses. The sequence is that of Taste receptor type 1 member 3 (Tas1r3) from Rattus norvegicus (Rat).